The sequence spans 143 residues: Putative protein FPV235 (143 aa).

The sequence is that of Putative protein FPV235 from Vertebrata (FPV).